The primary structure comprises 522 residues: 2-isopropylmalate synthase (522 aa).

The region spanning 5–267 is the Pyruvate carboxyltransferase domain; the sequence is VIIFDTTLRD…ETGINAKEIH (263 aa). Positions 14, 202, 204, and 238 each coordinate Mn(2+). Positions 392–522 are regulatory domain; that stretch reads QLQQLVVQSD…MHKNRELGGV (131 aa).

The protein belongs to the alpha-IPM synthase/homocitrate synthase family. LeuA type 1 subfamily. In terms of assembly, homodimer. It depends on Mn(2+) as a cofactor.

The protein localises to the cytoplasm. The catalysed reaction is 3-methyl-2-oxobutanoate + acetyl-CoA + H2O = (2S)-2-isopropylmalate + CoA + H(+). It participates in amino-acid biosynthesis; L-leucine biosynthesis; L-leucine from 3-methyl-2-oxobutanoate: step 1/4. Catalyzes the condensation of the acetyl group of acetyl-CoA with 3-methyl-2-oxobutanoate (2-ketoisovalerate) to form 3-carboxy-3-hydroxy-4-methylpentanoate (2-isopropylmalate). The chain is 2-isopropylmalate synthase from Shewanella sp. (strain MR-7).